The sequence spans 505 residues: DNA primase large subunit (505 aa).

The segment at 253–270 is interdomain linker; the sequence is LSHSYTGQDYSTQKNTGK. The interval 266–503 is interacts with PRIM1; sequence KNTGKISLDQ…LEMDLEGLEE (238 aa). Residues cysteine 287, cysteine 367, cysteine 384, and cysteine 424 each contribute to the [4Fe-4S] cluster site. An RNA:DNA duplex binding region spans residues 300–442; the sequence is HLRHGGRMQY…NVDDCGFSLN (143 aa). The segment at 463-486 is disordered; sequence KEISQPETPQHKPSTQKTRDAASA. Residues 467–478 are compositionally biased toward polar residues; that stretch reads QPETPQHKPSTQ. At threonine 470 the chain carries Phosphothreonine.

This sequence belongs to the eukaryotic-type primase large subunit family. As to quaternary structure, heterodimer of a catalytic subunit PRIM1 and a regulatory subunit PRIM2, also known as the DNA primase complex. Interacts via (C-terminus) with PRIM1. Component of the alpha DNA polymerase complex (also known as the alpha DNA polymerase-primase complex) consisting of four subunits: the catalytic subunit POLA1, the regulatory subunit POLA2, and the primase complex subunits PRIM1 and PRIM2 respectively. Within the complex, POLA1 directly interacts with PRIM2. The cofactor is [4Fe-4S] cluster.

Regulatory subunit of the DNA primase complex and component of the DNA polymerase alpha complex (also known as the alpha DNA polymerase-primase complex) which play an essential role in the initiation of DNA synthesis. During the S phase of the cell cycle, the DNA polymerase alpha complex (composed of a catalytic subunit POLA1, an accessory subunit POLA2 and two primase subunits, the catalytic subunit PRIM1 and the regulatory subunit PRIM2) is recruited to DNA at the replicative forks via direct interactions with MCM10 and WDHD1. The primase subunit of the polymerase alpha complex initiates DNA synthesis by oligomerising short RNA primers on both leading and lagging strands. These primers are initially extended by the polymerase alpha catalytic subunit and subsequently transferred to polymerase delta and polymerase epsilon for processive synthesis on the lagging and leading strand, respectively. In the primase complex, both subunits are necessary for the initial di-nucleotide formation, but the extension of the primer depends only on the catalytic subunit. Binds RNA:DNA duplex and coordinates the catalytic activities of PRIM1 and POLA2 during primase-to-polymerase switch. This Mus musculus (Mouse) protein is DNA primase large subunit (Prim2).